A 519-amino-acid chain; its full sequence is Ribonuclease Y (519 aa).

The helical transmembrane segment at P3 to V23 threads the bilayer. Residues T209–L272 form the KH domain. Residues V335–A428 enclose the HD domain.

The protein belongs to the RNase Y family.

It localises to the cell membrane. Functionally, endoribonuclease that initiates mRNA decay. The sequence is that of Ribonuclease Y from Bacillus licheniformis (strain ATCC 14580 / DSM 13 / JCM 2505 / CCUG 7422 / NBRC 12200 / NCIMB 9375 / NCTC 10341 / NRRL NRS-1264 / Gibson 46).